Reading from the N-terminus, the 207-residue chain is Thiamine-phosphate synthase (207 aa).

Residues 35–39 and asparagine 67 each bind 4-amino-2-methyl-5-(diphosphooxymethyl)pyrimidine; that span reads QYRDK. Aspartate 68 and aspartate 86 together coordinate Mg(2+). 4-amino-2-methyl-5-(diphosphooxymethyl)pyrimidine is bound at residue threonine 105. 132–134 contributes to the 2-[(2R,5Z)-2-carboxy-4-methylthiazol-5(2H)-ylidene]ethyl phosphate binding site; that stretch reads SVT. Lysine 135 serves as a coordination point for 4-amino-2-methyl-5-(diphosphooxymethyl)pyrimidine. Residue glycine 162 participates in 2-[(2R,5Z)-2-carboxy-4-methylthiazol-5(2H)-ylidene]ethyl phosphate binding.

It belongs to the thiamine-phosphate synthase family. The cofactor is Mg(2+).

The enzyme catalyses 2-[(2R,5Z)-2-carboxy-4-methylthiazol-5(2H)-ylidene]ethyl phosphate + 4-amino-2-methyl-5-(diphosphooxymethyl)pyrimidine + 2 H(+) = thiamine phosphate + CO2 + diphosphate. It carries out the reaction 2-(2-carboxy-4-methylthiazol-5-yl)ethyl phosphate + 4-amino-2-methyl-5-(diphosphooxymethyl)pyrimidine + 2 H(+) = thiamine phosphate + CO2 + diphosphate. It catalyses the reaction 4-methyl-5-(2-phosphooxyethyl)-thiazole + 4-amino-2-methyl-5-(diphosphooxymethyl)pyrimidine + H(+) = thiamine phosphate + diphosphate. Its pathway is cofactor biosynthesis; thiamine diphosphate biosynthesis; thiamine phosphate from 4-amino-2-methyl-5-diphosphomethylpyrimidine and 4-methyl-5-(2-phosphoethyl)-thiazole: step 1/1. Condenses 4-methyl-5-(beta-hydroxyethyl)thiazole monophosphate (THZ-P) and 2-methyl-4-amino-5-hydroxymethyl pyrimidine pyrophosphate (HMP-PP) to form thiamine monophosphate (TMP). This chain is Thiamine-phosphate synthase, found in Pseudomonas putida (strain ATCC 700007 / DSM 6899 / JCM 31910 / BCRC 17059 / LMG 24140 / F1).